A 488-amino-acid chain; its full sequence is 3-octaprenyl-4-hydroxybenzoate carboxy-lyase (488 aa).

Asn-172 is a binding site for Mn(2+). Prenylated FMN contacts are provided by residues 175-177 (IYR), 189-191 (RWL), and 194-195 (RG). Glu-238 is a binding site for Mn(2+). Asp-287 acts as the Proton donor in catalysis.

It belongs to the UbiD family. Homohexamer. It depends on prenylated FMN as a cofactor. Mn(2+) is required as a cofactor.

The protein localises to the cell membrane. It catalyses the reaction a 4-hydroxy-3-(all-trans-polyprenyl)benzoate + H(+) = a 2-(all-trans-polyprenyl)phenol + CO2. It functions in the pathway cofactor biosynthesis; ubiquinone biosynthesis. In terms of biological role, catalyzes the decarboxylation of 3-octaprenyl-4-hydroxy benzoate to 2-octaprenylphenol, an intermediate step in ubiquinone biosynthesis. The protein is 3-octaprenyl-4-hydroxybenzoate carboxy-lyase of Azotobacter vinelandii (strain DJ / ATCC BAA-1303).